The sequence spans 446 residues: Ribosomal protein uS12 methylthiotransferase RimO (446 aa).

Residues 7-118 form the MTTase N-terminal domain; sequence PKIAFAHLGC…IVEVIERVER (112 aa). Cysteine 16, cysteine 52, cysteine 81, cysteine 156, cysteine 160, and cysteine 163 together coordinate [4Fe-4S] cluster. The 230-residue stretch at 142 to 371 folds into the Radical SAM core domain; it reads TTPAPVAYLR…MELQQPIAQR (230 aa). In terms of domain architecture, TRAM spans 374 to 440; sequence AAEVGKIVPV…IYDLYGIIPA (67 aa).

It belongs to the methylthiotransferase family. RimO subfamily. The cofactor is [4Fe-4S] cluster.

It localises to the cytoplasm. The catalysed reaction is L-aspartate(89)-[ribosomal protein uS12]-hydrogen + (sulfur carrier)-SH + AH2 + 2 S-adenosyl-L-methionine = 3-methylsulfanyl-L-aspartate(89)-[ribosomal protein uS12]-hydrogen + (sulfur carrier)-H + 5'-deoxyadenosine + L-methionine + A + S-adenosyl-L-homocysteine + 2 H(+). Functionally, catalyzes the methylthiolation of an aspartic acid residue of ribosomal protein uS12. This is Ribosomal protein uS12 methylthiotransferase RimO from Thermosynechococcus vestitus (strain NIES-2133 / IAM M-273 / BP-1).